Reading from the N-terminus, the 362-residue chain is Peptide chain release factor 1 (362 aa).

N5-methylglutamine is present on Gln235.

It belongs to the prokaryotic/mitochondrial release factor family. In terms of processing, methylated by PrmC. Methylation increases the termination efficiency of RF1.

The protein localises to the cytoplasm. In terms of biological role, peptide chain release factor 1 directs the termination of translation in response to the peptide chain termination codons UAG and UAA. This Buchnera aphidicola subsp. Baizongia pistaciae (strain Bp) protein is Peptide chain release factor 1.